We begin with the raw amino-acid sequence, 552 residues long: Segmentation polarity homeobox protein engrailed (552 aa).

Over residues 93 to 108 the composition is skewed to low complexity; sequence SGSGSPASCSTPASST. 4 disordered regions span residues 93 to 112, 130 to 171, 309 to 419, and 433 to 460; these read SGSGSPASCSTPASSTPLTI, THTT…TAKP, PAAP…GGKN, and DRPSSGPRYRRPKQPKDKTNDEKRPRTA. Acidic residues predominate over residues 135-151; the sequence is EEEEAEEDDDIDVDVDD. Positions 317 to 382 are enriched in low complexity; it reads PPLSSSASSL…SGSGVNASSP (66 aa). The segment covering 446 to 457 has biased composition (basic and acidic residues); the sequence is QPKDKTNDEKRP. The segment at residues 454–513 is a DNA-binding region (homeobox); the sequence is EKRPRTAFSSEQLARLKREFNENRYLTERRRQQLSSELGLNEAQIKIWFQNKRAKIKKST.

Belongs to the engrailed homeobox family. In terms of processing, phosphorylated. Phosphorylation may directly or allosterically modify its function.

It localises to the nucleus. In terms of biological role, this protein specifies the body segmentation pattern. It is required for the development of the central nervous system. Transcriptional regulator that represses activated promoters. Wg signaling operates by inactivating the SGG repression of EN autoactivation. The chain is Segmentation polarity homeobox protein engrailed (en) from Drosophila melanogaster (Fruit fly).